The following is a 350-amino-acid chain: MNPRGLFQDFNPSKFLIYTCLLLFSVLLPLRLDGIIQWSYWAVFAPIWLWKLLVVAGASVGAGVWARNPRYRTEGEACVEFKAMLIAVGIHLLLLMFEVLVCDRVERGTHFWLLVFMPLFFVSPVSVAACVWGFRHDRSLELEILCSVNILQFIFIALKLDRIIHWPWLVVFVPLWILMSFLCLVVLYYIVWSLLFLRSLDVVAEQRRTHVTMAISWITIVVPLLTFEVLLVHRLDGHNTFSYVSIFVPLWLSLLTLMATTFRRKGGNHWWFGIRRDFCQFLLEIFPFLREYGNISYDLHHEDSEDAEETSVPEAPKIAPIFGKKARVVITQSPGKYVPPPPKLNIDMPD.

A run of 7 helical transmembrane segments spans residues 16-36, 41-61, 81-101, 111-131, 168-188, 211-231, and 240-260; these read LIYTCLLLFSVLLPLRLDGII, WAVFAPIWLWKLLVVAGASVG, FKAMLIAVGIHLLLLMFEVLV, FWLLVFMPLFFVSPVSVAACV, WLVVFVPLWILMSFLCLVVLY, VTMAISWITIVVPLLTFEVLL, and TFSYVSIFVPLWLSLLTLMAT.

It belongs to the TMEM185 family.

Its subcellular location is the membrane. This Homo sapiens (Human) protein is Transmembrane protein 185B (TMEM185B).